Here is a 267-residue protein sequence, read N- to C-terminus: Hydrolase FUB4 (267 aa).

Catalysis depends on charge relay system residues Ser93, Asp183, and His243.

Belongs to the AB hydrolase 3 family.

It participates in mycotoxin biosynthesis. In terms of biological role, hydrolase; part of the gene cluster that mediates the biosynthesis of fusaric acid, a mycotoxin with low to moderate toxicity to animals and humans, but with high phytotoxic properties. L-aspartate is suggested as fusaric acid amino acid precursor that is activated and further processed to O-acetyl-L-homoserine by cluster enzymes aspartate kinase FUB3 and homoserine O-acetyltransferase FUB5, as well as enzymes of the primary metabolism. The polyketide synthase (PKS) FUB1 generates the triketide trans-2-hexenal which is presumptively released by the hydrolase FUB4 and linked to the NRPS-bound amino acid precursor by NAD(P)-dependent dehydrogenase FUB6. FUB1, FUB4, and the non-canonical NRPS Fub8 may form an enzyme complex. Further processing of the NRPS-bound intermediate might be carried out by FUB6 and the sulfhydrylase FUB7, enabling a spontaneous electrocyclization to close the carbon backbone of fusaric acid. Dihydrofusaric acid is likely to be released via reduction by the thioester reductase (TR) domain of FUB8 whereupon the final oxidation to fusaric acid may (also) be performed by the FMN-dependent dehydrogenase FUB9. The chain is Hydrolase FUB4 from Fusarium oxysporum f. sp. lycopersici (strain 4287 / CBS 123668 / FGSC 9935 / NRRL 34936) (Fusarium vascular wilt of tomato).